The chain runs to 371 residues: Mitogen-activated protein kinase homolog MMK2 (371 aa).

The region spanning 37 to 323 (VPPIRSVGRG…VDEALCHPYM (287 aa)) is the Protein kinase domain. ATP contacts are provided by residues 43 to 51 (VGRGAYGIV) and lysine 66. The active-site Proton acceptor is aspartate 163. Position 195 is a phosphothreonine (threonine 195). The short motif at 195 to 197 (TEY) is the TXY element. Residue tyrosine 197 is modified to Phosphotyrosine.

The protein belongs to the protein kinase superfamily. CMGC Ser/Thr protein kinase family. MAP kinase subfamily. Mg(2+) is required as a cofactor. In terms of processing, dually phosphorylated on Thr-195 and Tyr-197, which activates the enzyme. Autophosphorylated.

It catalyses the reaction L-seryl-[protein] + ATP = O-phospho-L-seryl-[protein] + ADP + H(+). The enzyme catalyses L-threonyl-[protein] + ATP = O-phospho-L-threonyl-[protein] + ADP + H(+). Its activity is regulated as follows. Activated by tyrosine and threonine phosphorylation. The sequence is that of Mitogen-activated protein kinase homolog MMK2 (MMK2) from Medicago sativa (Alfalfa).